The sequence spans 144 residues: Mediator of RNA polymerase II transcription subunit 21 (144 aa).

This sequence belongs to the Mediator complex subunit 21 family. Component of the Mediator complex, which is composed of MED1, MED4, MED6, MED7, MED8, MED9, MED10, MED11, MED12, MED13, MED13L, MED14, MED15, MED16, MED17, MED18, MED19, MED20, MED21, MED22, MED23, MED24, MED25, MED26, MED27, MED29, MED30, MED31, CCNC, CDK8 and CDC2L6/CDK11. The MED12, MED13, CCNC and CDK8 subunits form a distinct module termed the CDK8 module. Mediator containing the CDK8 module is less active than Mediator lacking this module in supporting transcriptional activation. Individual preparations of the Mediator complex lacking one or more distinct subunits have been variously termed ARC, CRSP, DRIP, PC2, SMCC and TRAP. Interacts with PPARG. Interacts with THRA in a ligand-dependent fashion.

The protein resides in the nucleus. Functionally, component of the Mediator complex, a coactivator involved in the regulated transcription of nearly all RNA polymerase II-dependent genes. Mediator functions as a bridge to convey information from gene-specific regulatory proteins to the basal RNA polymerase II transcription machinery. Mediator is recruited to promoters by direct interactions with regulatory proteins and serves as a scaffold for the assembly of a functional preinitiation complex with RNA polymerase II and the general transcription factors. The chain is Mediator of RNA polymerase II transcription subunit 21 (MED21) from Bos taurus (Bovine).